The primary structure comprises 538 residues: MPAPTQLFFPLIRNCELSRIYGTACYCHHKHLCCSPPYIPQSRPRYTPHPAYATFYRPKESWWQYTQGRRYASTPQKFYLTPPQVNSILKANEYSFKVPEFDGKNVSSVLGFDSNQLPANAPIEDRRSAATCLQTRGMLLGVFDGHAGCACSQAVSERLFYYIAVSLLPHETLLEIENAVESGRALLPILQWHKHPNDYFSKEASKLYFNSLRTYWQELIDLNTGESTDIDVKEALINAFKRLDNDISLEAQVGDPNSFLNYLVLRVAFSGATACVAHVDGVDLHVANTGDSRAMLGVQEEDGSWSAVTLSNDHNAQNEREVERLKLEHPKNEAKSVVKQDRLLGLLMPFRAFGDVKFKWSIDLQKRVIESGPDQLNDNEYTKFIPPNYYTPPYLTAEPEVTYHRLRPQDKFLVLATDGLWETMHRQDVVRIVGEYLTGMHHQQPIAVGGYKVTLGQMHGLLTERRAKMSSVFEDQNAATHLIRHAVGNNEFGAVDHERLSKMLSLPEELARMYRDDITIIVVQFNSHVVGAYQNQEQ.

A mitochondrion-targeting transit peptide spans 1-71 (MPAPTQLFFP…WWQYTQGRRY (71 aa)). Residues 109 to 525 (VLGFDSNQLP…DDITIIVVQF (417 aa)) enclose the PPM-type phosphatase domain. The Mn(2+) site is built by aspartate 144 and glycine 145. An N6-acetyllysine modification is found at lysine 202. Mn(2+) is bound by residues aspartate 418 and aspartate 516.

It belongs to the PP2C family. In terms of assembly, heterodimer of a catalytic (PDP1) and a regulatory (PDPR) subunit. Requires Mn(2+) as cofactor. The cofactor is Mg(2+).

It localises to the mitochondrion. It catalyses the reaction O-phospho-L-seryl-[pyruvate dehydrogenase E1 alpha subunit] + H2O = L-seryl-[pyruvate dehydrogenase E1 alpha subunit] + phosphate. Its activity is regulated as follows. Magnesium-dependent and calcium-stimulated. PDP1 activity strongly depends on its Ca(2+)-dependent binding to the lipoyl domain of E2 subunit of component of the pyruvate dehydrogenase complex. Mitochondrial enzyme that catalyzes the dephosphorylation and concomitant reactivation of the alpha subunit of the E1 component of the pyruvate dehydrogenase complex (PDC), thereby stimulating the conversion of pyruvate into acetyl-CoA. The sequence is that of [Pyruvate dehydrogenase [acetyl-transferring]]-phosphatase 1, mitochondrial (PDP1) from Bos taurus (Bovine).